We begin with the raw amino-acid sequence, 666 residues long: ATP-dependent RNA helicase MSS116, mitochondrial (666 aa).

Residues 1–22 constitute a mitochondrion transit peptide; sequence MLRHCSLGLVTTQISAIAPLRL. Positions 38–60 are enriched in basic and acidic residues; it reads RDRRSSRSREDKPYNSRTRRFDD. A disordered region spans residues 38-131; that stretch reads RDRRSSRSRE…KSYSKGGNTS (94 aa). Over residues 120-131 the composition is skewed to polar residues; sequence NTKSYSKGGNTS. Residues 159–187 carry the Q motif motif; it reads SLLEKNVISRDLYDSISRMGFEQLTPVQQ. In terms of domain architecture, Helicase ATP-binding spans 192 to 379; the sequence is PIITNSDSDI…NDIMNKEECL (188 aa). 205 to 212 is an ATP binding site; sequence AKTGTGKT. The short motif at 320–323 is the DEAD box element; that stretch reads DEAD. Residues 408–560 form the Helicase C-terminal domain; the sequence is NLYAAIEHIR…NIRKFEAQPH (153 aa).

The protein belongs to the DEAD box helicase family. DDX18/HAS1 subfamily.

The protein localises to the mitochondrion matrix. The catalysed reaction is ATP + H2O = ADP + phosphate + H(+). Its function is as follows. ATP-dependent RNA helicase required for mitochondrial splicing of group I and II introns. Also required for efficient mitochondrial translation. In Candida glabrata (strain ATCC 2001 / BCRC 20586 / JCM 3761 / NBRC 0622 / NRRL Y-65 / CBS 138) (Yeast), this protein is ATP-dependent RNA helicase MSS116, mitochondrial (MSS116).